Reading from the N-terminus, the 154-residue chain is Small ribosomal subunit protein uS7 (154 aa).

It belongs to the universal ribosomal protein uS7 family.

In Nicotiana plumbaginifolia (Leadwort-leaved tobacco), this protein is Small ribosomal subunit protein uS7 (RPS5).